Here is a 127-residue protein sequence, read N- to C-terminus: Fluoride-specific ion channel FluC (127 aa).

Helical transmembrane passes span 4 to 24 (TLLAVFIGGGVGSVARWQLGV), 35 to 55 (LGTLLANLIGAFVIGGALAFF), 71 to 91 (TGLCGGLTTFSTFSAEVVMFL), and 103 to 123 (VLLNLAGSLLMTALAFALVTW). Na(+) is bound by residues glycine 75 and threonine 78.

This sequence belongs to the fluoride channel Fluc/FEX (TC 1.A.43) family.

The protein localises to the cell inner membrane. The enzyme catalyses fluoride(in) = fluoride(out). With respect to regulation, na(+) is not transported, but it plays an essential structural role and its presence is essential for fluoride channel function. Fluoride-specific ion channel. Important for reducing fluoride concentration in the cell, thus reducing its toxicity. The chain is Fluoride-specific ion channel FluC from Pectobacterium atrosepticum (strain SCRI 1043 / ATCC BAA-672) (Erwinia carotovora subsp. atroseptica).